The primary structure comprises 125 residues: Holo-[acyl-carrier-protein] synthase (125 aa).

Positions 8 and 57 each coordinate Mg(2+).

This sequence belongs to the P-Pant transferase superfamily. AcpS family. Requires Mg(2+) as cofactor.

Its subcellular location is the cytoplasm. It catalyses the reaction apo-[ACP] + CoA = holo-[ACP] + adenosine 3',5'-bisphosphate + H(+). Its function is as follows. Transfers the 4'-phosphopantetheine moiety from coenzyme A to a Ser of acyl-carrier-protein. In Blochmanniella pennsylvanica (strain BPEN), this protein is Holo-[acyl-carrier-protein] synthase.